The sequence spans 327 residues: Methionyl-tRNA formyltransferase (327 aa).

A (6S)-5,6,7,8-tetrahydrofolate-binding site is contributed by 121-124 (SLLP).

This sequence belongs to the Fmt family.

The catalysed reaction is L-methionyl-tRNA(fMet) + (6R)-10-formyltetrahydrofolate = N-formyl-L-methionyl-tRNA(fMet) + (6S)-5,6,7,8-tetrahydrofolate + H(+). In terms of biological role, attaches a formyl group to the free amino group of methionyl-tRNA(fMet). The formyl group appears to play a dual role in the initiator identity of N-formylmethionyl-tRNA by promoting its recognition by IF2 and preventing the misappropriation of this tRNA by the elongation apparatus. This chain is Methionyl-tRNA formyltransferase, found in Paraburkholderia phymatum (strain DSM 17167 / CIP 108236 / LMG 21445 / STM815) (Burkholderia phymatum).